The sequence spans 174 residues: UPF0316 protein lin1888 (174 aa).

3 consecutive transmembrane segments (helical) span residues 4 to 24, 36 to 56, and 62 to 82; these read GIFI…IYTV, LAAL…SLVL, and IANV…GMKI.

The protein belongs to the UPF0316 family.

It is found in the cell membrane. This Listeria innocua serovar 6a (strain ATCC BAA-680 / CLIP 11262) protein is UPF0316 protein lin1888.